The chain runs to 628 residues: Vacuolar-sorting receptor 3 (628 aa).

Residues 1-24 (MKQLLCYLPWLLLLTLLVSPLNDA) form the signal peptide. Over 25–569 (RFVVEKNSLS…SKTGAQVRSA (545 aa)) the chain is Lumenal. Residues 56 to 168 (QYGGSMAGTV…GFGEKLKKAI (113 aa)) form the PA domain. N-linked (GlcNAc...) asparagine glycans are attached at residues Asn148, Asn294, and Asn434. 2 EGF-like domains span residues 416 to 466 (ESNE…SHCE) and 469 to 516 (GPGR…KKCE). Cystine bridges form between Cys420/Cys438, Cys427/Cys447, Cys449/Cys465, Cys473/Cys493, Cys480/Cys501, Cys503/Cys515, and Cys545/Cys558. One can recognise an EGF-like 3; calcium-binding domain in the interval 517–559 (DINECKEKKACQCPECSCKNTWGSYECSCSGDLLYIRDHDTCI). A helical transmembrane segment spans residues 570–590 (WAAVWLIMLSLGLAAAGAYLV). Topologically, residues 591–628 (YKYRLRQYMDSEIRAIMAQYMPLDSQPEIPNHVNDERA) are cytoplasmic. The Tyrosine-based internalization motif signature appears at 610–613 (YMPL).

It belongs to the VSR (BP-80) family. In terms of tissue distribution, expressed in seeds, seedlings, roots, leaves, flowers and siliques.

It localises to the membrane. The protein localises to the golgi apparatus membrane. The protein resides in the cytoplasmic vesicle. Its subcellular location is the clathrin-coated vesicle membrane. It is found in the prevacuolar compartment membrane. Functionally, vacuolar-sorting receptor (VSR) involved in clathrin-coated vesicles sorting from Golgi apparatus to vacuoles. This chain is Vacuolar-sorting receptor 3 (VSR3), found in Arabidopsis thaliana (Mouse-ear cress).